The primary structure comprises 69 residues: NADH dehydrogenase [ubiquinone] 1 beta subcomplex subunit 2 (69 aa).

It belongs to the complex I NDUFB2 subunit family. Complex I is composed of at least 49 different subunits.

It localises to the mitochondrion inner membrane. Functionally, accessory subunit of the mitochondrial membrane respiratory chain NADH dehydrogenase (Complex I), that is believed not to be involved in catalysis. Complex I functions in the transfer of electrons from NADH to the respiratory chain. The immediate electron acceptor for the enzyme is believed to be ubiquinone. In Arabidopsis thaliana (Mouse-ear cress), this protein is NADH dehydrogenase [ubiquinone] 1 beta subcomplex subunit 2.